Consider the following 1219-residue polypeptide: FYVE, RhoGEF and PH domain-containing protein 5 (1219 aa).

Disordered stretches follow at residues 1 to 85 (MGSP…SCQI), 94 to 113 (EEDF…PTES), 201 to 227 (SDTQ…GQVP), and 310 to 367 (GRES…PSSV). Residues 23-50 (EVFEEDSADAAEGEDQIEQEEPPNCDEE) show a composition bias toward acidic residues. Polar residues predominate over residues 201-214 (SDTQAASGTLSGYS). Over residues 319-337 (REPEGAGLDSHRVRRKEDN) the composition is skewed to basic and acidic residues. Polar residues predominate over residues 346–356 (SSGSFSQRSHL). Positions 357–367 (PSSGTSTPSSV) are enriched in low complexity. Thr555 carries the phosphothreonine modification. Residues 586–599 (ESKQQSSEQEAESA) are compositionally biased toward low complexity. Positions 586 to 644 (ESKQQSSEQEAESAYTEPYKVCPISAAPREDLTSDEEQGSSEEEDSASRDPSLSHKGEG) are disordered. Over residues 618–630 (TSDEEQGSSEEED) the composition is skewed to acidic residues. Over residues 631–644 (SASRDPSLSHKGEG) the composition is skewed to basic and acidic residues. Positions 647-840 (RALVIAQELL…SKVTDRANES (194 aa)) constitute a DH domain. Residues 869–963 (EFLKEGTLMR…WHYCLSRALP (95 aa)) enclose the PH 1 domain. Residues 998-1057 (VTHAMMCMNCGCDFSLTVRRHHCHACGKIVCRNCSRNKYPLKCLKNRMAKVCDGCFRELK) form an FYVE-type zinc finger. Zn(2+) is bound by residues Cys1004, Cys1007, Cys1020, Cys1023, Cys1028, Cys1031, Cys1049, and Cys1052. Residues 1120–1218 (GSAISGYLSR…WMEAMEDASV (99 aa)) enclose the PH 2 domain.

In terms of tissue distribution, expressed in highly vascularized tissues, such as lung, kidney and ovary.

Its subcellular location is the cytoplasm. It localises to the cytoskeleton. The protein localises to the cell projection. It is found in the ruffle membrane. The protein resides in the endoplasmic reticulum. Its subcellular location is the golgi apparatus. It localises to the early endosome. Functionally, activates CDC42, a member of the Ras-like family of Rho- and Rac proteins, by exchanging bound GDP for free GTP. Mediates VEGF-induced CDC42 activation. May regulate proangiogenic action of VEGF in vascular endothelial cells, including network formation, directional movement and proliferation. May play a role in regulating the actin cytoskeleton and cell shape. The polypeptide is FYVE, RhoGEF and PH domain-containing protein 5 (Fgd5) (Mus musculus (Mouse)).